Here is a 340-residue protein sequence, read N- to C-terminus: MKLAVIGGDGIGPEVTDEALKVLRALRADIETTDLDLGARRYLRNGELLTDEDLALLREHDAILLGAIGAPGSVPPGVLERGLLLKLRFALDHHVNLRPSKLYEGVESPLKNPGEIDFVVVREGTEGAYTGNGGAIRVGTPHETANETSVNTRYGAERVIRYAFELAQSRRRHLTLVHKTNVLVHGGGLWQRTVDEVAREYPEVTVDYNHIDAATIYLVTDPSRFDVIVTDNLFGDILTDEAGAISGGIGLAASGNIDATGTNPSMFEPVHGSAPDIMGKGIADPTAAILSAAMMLRHLGDEANAVRIEEAVARDVAGRDPEAPISTTEVGDRIAAAVVA.

Substrate-binding residues include Arg88, Arg98, Arg122, and Asp212. Residues Asp212, Asp236, and Asp240 each contribute to the Mg(2+) site. 272–284 serves as a coordination point for NAD(+); the sequence is GSAPDIMGKGIAD.

Belongs to the isocitrate and isopropylmalate dehydrogenases family. LeuB type 2 subfamily. As to quaternary structure, homodimer. The cofactor is Mg(2+). Requires Mn(2+) as cofactor.

It localises to the cytoplasm. It catalyses the reaction (2R,3S)-3-isopropylmalate + NAD(+) = 4-methyl-2-oxopentanoate + CO2 + NADH. The protein operates within amino-acid biosynthesis; L-leucine biosynthesis; L-leucine from 3-methyl-2-oxobutanoate: step 3/4. In terms of biological role, catalyzes the oxidation of 3-carboxy-2-hydroxy-4-methylpentanoate (3-isopropylmalate) to 3-carboxy-4-methyl-2-oxopentanoate. The product decarboxylates to 4-methyl-2 oxopentanoate. This Corynebacterium efficiens (strain DSM 44549 / YS-314 / AJ 12310 / JCM 11189 / NBRC 100395) protein is 3-isopropylmalate dehydrogenase.